A 238-amino-acid polypeptide reads, in one-letter code: tRNA (guanine-N(7)-)-methyltransferase (238 aa).

Residues glutamate 68, glutamate 93, aspartate 120, and aspartate 143 each contribute to the S-adenosyl-L-methionine site. Aspartate 143 is a catalytic residue. Residues lysine 147, aspartate 179, and 216-219 (TKFE) contribute to the substrate site.

This sequence belongs to the class I-like SAM-binding methyltransferase superfamily. TrmB family.

The enzyme catalyses guanosine(46) in tRNA + S-adenosyl-L-methionine = N(7)-methylguanosine(46) in tRNA + S-adenosyl-L-homocysteine. It participates in tRNA modification; N(7)-methylguanine-tRNA biosynthesis. In terms of biological role, catalyzes the formation of N(7)-methylguanine at position 46 (m7G46) in tRNA. This is tRNA (guanine-N(7)-)-methyltransferase from Shewanella putrefaciens (strain CN-32 / ATCC BAA-453).